The following is a 220-amino-acid chain: FMN-dependent NADH:quinone oxidoreductase 1 (220 aa).

18–20 is a binding site for FMN; that stretch reads SVS.

Belongs to the azoreductase type 1 family. As to quaternary structure, homodimer. Requires FMN as cofactor.

It carries out the reaction 2 a quinone + NADH + H(+) = 2 a 1,4-benzosemiquinone + NAD(+). The catalysed reaction is N,N-dimethyl-1,4-phenylenediamine + anthranilate + 2 NAD(+) = 2-(4-dimethylaminophenyl)diazenylbenzoate + 2 NADH + 2 H(+). Functionally, quinone reductase that provides resistance to thiol-specific stress caused by electrophilic quinones. Its function is as follows. Also exhibits azoreductase activity. Catalyzes the reductive cleavage of the azo bond in aromatic azo compounds to the corresponding amines. In Bacillus anthracis, this protein is FMN-dependent NADH:quinone oxidoreductase 1.